Consider the following 210-residue polypeptide: tRNA (guanine-N(7)-)-methyltransferase (210 aa).

S-adenosyl-L-methionine is bound by residues glutamate 36, glutamate 61, aspartate 90, and aspartate 112. Aspartate 112 is a catalytic residue. Substrate-binding positions include lysine 116, aspartate 148, and 188-191 (TEYE).

This sequence belongs to the class I-like SAM-binding methyltransferase superfamily. TrmB family.

It carries out the reaction guanosine(46) in tRNA + S-adenosyl-L-methionine = N(7)-methylguanosine(46) in tRNA + S-adenosyl-L-homocysteine. It participates in tRNA modification; N(7)-methylguanine-tRNA biosynthesis. Functionally, catalyzes the formation of N(7)-methylguanine at position 46 (m7G46) in tRNA. This chain is tRNA (guanine-N(7)-)-methyltransferase, found in Mycoplasma genitalium (strain ATCC 33530 / DSM 19775 / NCTC 10195 / G37) (Mycoplasmoides genitalium).